A 629-amino-acid polypeptide reads, in one-letter code: MSEVETSVEKHVFEADVAKLLHLMVHSVYSDKNVFLRELISNAADACEKLRYEAIVAPELLGSDPASRITLTLDEENARLVIEDNGIGMGRDELVESLGTIARSGTRAFMERIEAAQNKDGAQLIGQFGVGFYSAFMVADNVDVVSRRAGTDKAWHWASDGKGSYTVSAVDLADAPARGTRITLHLMDEAKTFTSRWTVERIVKEQSGHVPVPISIVEKPGAEPAQVADGTALWTKQKSEISKDDYTDFYRGVAGQYDEPALTVHFRAEGRHEYTALAFVPGSKPFDLFDPDRKGRMKLYVKRVFITDEAELLPRYLRFVRGLVDTADLPLNVSREMIQESPLLANIRKGLTNRVLTSIEKLAESDSEAFAKIWENFGSVIKEGIYEDFERRGQLLALSRFRTTADDDKPRALSDYVKEMKEGQSAIYYLTGDNLAQLKASPQLEGFRARGIEVLLLTCPVDSFWVTTAPDFDGKPFKSITQGAADLAGIAKNDDAAAASPEAGAAVTDFVSFARETLGEAVSDVRTSDRLTESAVCLVAPEQGPDRQLQKMLQDAGRIEGAPKPVLEINPGHQLIAALATCPSEDKAFREDAVKLLLDQARVLDGDRPEDPRAFAERLSRVFGRALKE.

The tract at residues 1–335 (MSEVETSVEK…TADLPLNVSR (335 aa)) is a; substrate-binding. The b stretch occupies residues 336-551 (EMIQESPLLA…EQGPDRQLQK (216 aa)). Residues 552–629 (MLQDAGRIEG…SRVFGRALKE (78 aa)) form a c region.

The protein belongs to the heat shock protein 90 family. Homodimer.

It is found in the cytoplasm. In terms of biological role, molecular chaperone. Has ATPase activity. This Rhizobium meliloti (strain 1021) (Ensifer meliloti) protein is Chaperone protein HtpG.